A 298-amino-acid polypeptide reads, in one-letter code: Troponin T, cardiac muscle (298 aa).

The span at 1–70 (MSDIEEVVEE…EAKEAEDGPM (70 aa)) shows a compositional bias: acidic residues. 2 disordered regions span residues 1–95 (MSDI…GERV) and 120–219 (FENR…EKKK). Serine 2 carries the N-acetylserine modification. A Phosphoserine; by CK2 modification is found at serine 2. 2 stretches are compositionally biased toward basic and acidic residues: residues 120–183 (FENR…DEAR) and 203–219 (QTER…EKKK). Position 204 is a phosphothreonine; by PKC/PRKCA (threonine 204). Serine 208 is subject to Phosphoserine; by PKC/PRKCA. Position 213 is a phosphothreonine; by PKC/PRKCA and RAF1 (threonine 213). The residue at position 294 (threonine 294) is a Phosphothreonine; by PKC/PRKCA.

This sequence belongs to the troponin T family. Phosphorylation at Thr-213 by PRKCA induces significant reduction in myofilament calcium sensitivity and actomyosin ATPase activity. Heart. The fetal heart shows a greater expression in the atrium than in the ventricle, while the adult heart shows a greater expression in the ventricle than in the atrium. Isoform 6 predominates in normal adult heart. Isoforms 1, 7 and 8 are expressed in fetal heart. Isoform 7 is also expressed in failing adult heart.

Functionally, troponin T is the tropomyosin-binding subunit of troponin, the thin filament regulatory complex which confers calcium-sensitivity to striated muscle actomyosin ATPase activity. In Homo sapiens (Human), this protein is Troponin T, cardiac muscle (TNNT2).